The sequence spans 549 residues: Probable protein kinase UbiB (549 aa).

Positions 123–501 constitute a Protein kinase domain; the sequence is DFNEIPLASA…QQQAHKSNYL (379 aa). Residues 129–137 and lysine 152 each bind ATP; that span reads LASASISQV. The Proton acceptor role is filled by aspartate 287. 2 helical membrane passes run 496-516 and 520-540; these read HKSN…TLLI and ATLW…FVGW.

This sequence belongs to the ABC1 family. UbiB subfamily.

It localises to the cell inner membrane. The protein operates within cofactor biosynthesis; ubiquinone biosynthesis [regulation]. Its function is as follows. Is probably a protein kinase regulator of UbiI activity which is involved in aerobic coenzyme Q (ubiquinone) biosynthesis. The polypeptide is Probable protein kinase UbiB (Shewanella baltica (strain OS223)).